Reading from the N-terminus, the 615-residue chain is (+)-alpha-pinene synthase TPS2, chloroplastic (615 aa).

The N-terminal 55 residues, 1–55, are a transit peptide targeting the chloroplast; it reads MHCMAVRHFAPSSSLSIFSSTNINNHFFGREIFTPKTSNITTKKSRSRPNCNPIQ. R330, D367, D371, R509, and D512 together coordinate (2E)-geranyl diphosphate. Mg(2+)-binding residues include D367 and D371. A DDXXD motif motif is present at residues 367 to 371; that stretch reads DDIYD. D512, T516, and E520 together coordinate Mg(2+).

Belongs to the terpene synthase family. Tpsb subfamily. It depends on Mg(2+) as a cofactor. The cofactor is Mn(2+). Requires K(+) as cofactor. As to expression, trichome.

The protein localises to the plastid. Its subcellular location is the chloroplast. It catalyses the reaction (2E)-geranyl diphosphate = (1R,5R)-alpha-pinene + diphosphate. It carries out the reaction (2E)-geranyl diphosphate = (1R,5R)-beta-pinene + diphosphate. The catalysed reaction is (2E)-geranyl diphosphate = (4S)-limonene + diphosphate. The enzyme catalyses (2E)-geranyl diphosphate = beta-myrcene + diphosphate. The protein operates within secondary metabolite biosynthesis; terpenoid biosynthesis. It functions in the pathway terpene metabolism; (-)-alpha-pinene biosynthesis; (-)-alpha-pinene from geranyl diphosphate: step 1/1. Involved in monoterpene (C10) olefins biosynthesis, constituants of cannabinoids and terpenoids-rich resins. Catalyzes mainly the conversion of (2E)-geranyl diphosphate to (+)-alpha-pinene, and also produces minor products such as (-)-limonene, (+)-beta-pinene and beta-myrcene. The protein is (+)-alpha-pinene synthase TPS2, chloroplastic of Cannabis sativa (Hemp).